Consider the following 227-residue polypeptide: Cytidylate kinase (227 aa).

Residue 12–20 (GPSGAGKGT) participates in ATP binding.

Belongs to the cytidylate kinase family. Type 1 subfamily.

The protein resides in the cytoplasm. It catalyses the reaction CMP + ATP = CDP + ADP. The enzyme catalyses dCMP + ATP = dCDP + ADP. This is Cytidylate kinase from Xanthomonas axonopodis pv. citri (strain 306).